The sequence spans 405 residues: Nuclear hormone receptor family member nhr-199 (405 aa).

Positions 20–111 (IPYCLICSEV…MGMQRSSVQQ (92 aa)) form a DNA-binding region, nuclear receptor. 2 consecutive NR C4-type zinc fingers follow at residues 23-44 (CLIC…CRAC) and 60-94 (CGRN…CKAC). Residues 126 to 376 (RGKPVLNKLR…PFSRIHGNQK (251 aa)) enclose the NR LBD domain.

Belongs to the nuclear hormone receptor family.

The protein resides in the nucleus. Functionally, orphan nuclear receptor. This is Nuclear hormone receptor family member nhr-199 (nhr-199) from Caenorhabditis elegans.